The following is a 450-amino-acid chain: MEQAAPDPERLWQPAPLEPLSHPDAGLESMVGEETKGARDEGPGDGTMTENNFSLKKIEISVSEAEKRTGRNAMNMQETYTAYLIETRSVEHNDGQSVLTDSLWRRYSEFELLRNYLLVYYPHIVVPPLPEKRAEFVWHKLSADNMDPDFVERRRIGLENFLLRVASHPILCRDKIFYLFLTQEGNWKETVNETGFQLKADSRLKALNATFRVKNPDKRFIELKHYSDELQSVISHLLRVRARVADRLYGVYKVHGNYGRVFSEWSAIEKEMGDGLQSAGHHMDVYASSIDDILEDEEHYADQLKEYLFYAEALRAVCRKHELMQYDLEMAAQDLASKKQQCEELATGTVRTFSLKGMTTKLFGQETPEQREARIKMLEEQIKEGEQQLKSKNLEGREFVRNAWADIERFKEQKNHDLKEALISYAVMQISMCKKGIQVWTNAKECFSKM.

Met-1 is modified (N-acetylmethionine). The disordered stretch occupies residues 1–53 (MEQAAPDPERLWQPAPLEPLSHPDAGLESMVGEETKGARDEGPGDGTMTENNF). Residues 33–42 (EETKGARDEG) show a composition bias toward basic and acidic residues. A PX domain is found at 61-187 (SVSEAEKRTG…YLFLTQEGNW (127 aa)). Positions 106, 108, 132, and 154 each coordinate a 1,2-diacyl-sn-glycero-3-phospho-(1D-myo-inositol-3-phosphate).

It belongs to the sorting nexin family. As to quaternary structure, heterodimer; heterodimerizes with SNX7 or SNX30. Interacts with WWC1/KIBRA. Identified in a complex with WWC1/KIBRA and dynein components DYNLL1 and DYNC1I2. Interacts with BIN1.

It is found in the early endosome. The protein resides in the early endosome membrane. In terms of biological role, involved in the regulation of endocytosis and in several stages of intracellular trafficking. Plays a role in recycling endocytosed transferrin receptor and prevent its degradation. Involved in autophagosome assembly by regulating trafficking and recycling of phospholipid scramblase ATG9A. The sequence is that of Sorting nexin-4 from Bos taurus (Bovine).